Reading from the N-terminus, the 604-residue chain is Matrix metalloproteinase-21 (604 aa).

A signal peptide spans 1 to 22 (MPSIKLLVWCCLCVISPRLCHS). Positions 23–180 (EKLFHSRDRS…PDPPKIRRKR (158 aa)) are excised as a propeptide. Residues 132–175 (KPRCGVPDNQMAKKETEKPTAAQSLENKTKDSENVTQQNPDPPK) are disordered. The Cysteine switch motif lies at 133 to 140 (PRCGVPDN). Position 135 (Cys135) interacts with Zn(2+). N-linked (GlcNAc...) asparagine glycosylation is found at Asn158 and Asn165. Zn(2+) is bound at residue His318. The active site involves Glu319. His322 and His328 together coordinate Zn(2+). The cysteines at positions 364 and 595 are disulfide-linked. Hemopexin repeat units lie at residues 365–424 (EGPF…WHGI), 426–482 (VQNI…FPGI), 483–531 (PSPI…FPAV), and 538–594 (KGNI…WFDI). N-linked (GlcNAc...) asparagine glycans are attached at residues Asn404 and Asn407.

It belongs to the peptidase M10A family. Zn(2+) serves as cofactor. It depends on Ca(2+) as a cofactor. Post-translationally, the precursor is cleaved by a furin endopeptidase.

It localises to the secreted. In terms of biological role, plays a specialized role in the generation of left-right asymmetry during embryogenesis. May act as a negative regulator of the NOTCH-signaling pathway. This Xenopus laevis (African clawed frog) protein is Matrix metalloproteinase-21 (mmp21).